A 357-amino-acid polypeptide reads, in one-letter code: DNA integrity scanning protein DisA (357 aa).

Positions 8-146 constitute a DAC domain; the sequence is VKSMINILQL…GNLRYTLKDI (139 aa). ATP-binding positions include G75, L93, and 106-110; that span reads MRHRT.

It belongs to the DisA family. In terms of assembly, homooctamer. Requires Mg(2+) as cofactor.

The enzyme catalyses 2 ATP = 3',3'-c-di-AMP + 2 diphosphate. Its function is as follows. Participates in a DNA-damage check-point that is active prior to asymmetric division when DNA is damaged. DisA forms globular foci that rapidly scan along the chromosomes during sporulation, searching for lesions. When a lesion is present, DisA pauses at the lesion site. This triggers a cellular response that culminates in a temporary block in sporulation initiation. Functionally, also has diadenylate cyclase activity, catalyzing the condensation of 2 ATP molecules into cyclic di-AMP (c-di-AMP). c-di-AMP acts as a signaling molecule that couples DNA integrity with progression of sporulation. The rise in c-di-AMP level generated by DisA while scanning the chromosome, operates as a positive signal that advances sporulation; upon encountering a lesion, the DisA focus arrests at the damaged site and halts c-di-AMP synthesis. In Bacillus cereus (strain AH187), this protein is DNA integrity scanning protein DisA.